The primary structure comprises 154 residues: MITVAFVCLGNICRSPMAEAIMRQKLLDRNINDIKVTSRGTGQWNLGEPPHEGTQAILSEHDIPFDGMISELFESNDDFDYIIAMDQSNVDNIKQINPNIKGQLFKLLEFSDMTETDVPDPYYTNNFEGVYKMVQSSCDNLINFIIKDANLREE.

Catalysis depends on Cys8, which acts as the Nucleophile. Residue Arg14 is part of the active site. Asp120 (proton donor) is an active-site residue.

It belongs to the low molecular weight phosphotyrosine protein phosphatase family.

The catalysed reaction is O-phospho-L-tyrosyl-[protein] + H2O = L-tyrosyl-[protein] + phosphate. Functionally, dephosphorylates the phosphotyrosine-containing proteins. This is Low molecular weight protein-tyrosine-phosphatase PtpA (ptpA) from Staphylococcus saprophyticus subsp. saprophyticus (strain ATCC 15305 / DSM 20229 / NCIMB 8711 / NCTC 7292 / S-41).